Reading from the N-terminus, the 312-residue chain is Non-structural protein 12A (312 aa).

Low complexity predominate over residues methionine 1 to glycine 23. 3 disordered regions span residues methionine 1–valine 37, phenylalanine 62–asparagine 97, and serine 112–threonine 159. Over residues valine 63–leucine 73 the composition is skewed to basic and acidic residues. The segment covering lysine 74–asparagine 97 has biased composition (polar residues). Basic and acidic residues predominate over residues aspartate 122–glutamine 134. The span at glutamate 135 to arginine 154 shows a compositional bias: polar residues.

It belongs to the phytoreovirus non-structural protein Pns12A family.

The protein localises to the host cytoplasm. Functionally, constituent of viral factories. This is Non-structural protein 12A from Rice dwarf virus (isolate O) (RDV).